A 1233-amino-acid polypeptide reads, in one-letter code: Hemocyanin A-type, units Ode to Odg (1233 aa).

Positions 1 to 4 are ODD; sequence EGNE. The tract at residues 5-422 is ODE; it reads YLVRKNVERL…KQDADIDIPL (418 aa). H45 contributes to the Cu cation binding site. C51 and C62 form a disulfide bridge. The segment at residues 63–65 is a cross-link (2'-(S-cysteinyl)-histidine (Cys-His)); sequence CLH. Cu cation is bound by residues H65, H74, H186, H190, and H217. Cystine bridges form between C176–C243 and C334–C340. N392 is a glycosylation site (N-linked (GlcNAc...) asparagine). The tract at residues 423–839 is ODF; sequence NHIRRNVESL…KEIEKEAVRG (417 aa). H463 lines the Cu cation pocket. The cysteines at positions 468 and 478 are disulfide-linked. Positions 479-481 form a cross-link, 2'-(S-cysteinyl)-histidine (Cys-His); the sequence is CLH. Cu cation-binding residues include H481 and H490. N538 carries an N-linked (GlcNAc...) asparagine glycan. 2 disulfide bridges follow: C589–C656 and C743–C748. Cu cation is bound by residues H599, H603, and H630. The segment at 840–1233 is ODG; sequence TIIRKNVNSL…VFLAPAKTTH (394 aa). H880 contacts Cu cation. A disulfide bridge connects residues C886 and C896. Residue N890 is glycosylated (N-linked (GlcNAc...) asparagine). A cross-link (2'-(S-cysteinyl)-histidine (Cys-His)) is located at residues 897–899; it reads CQH. Cu cation is bound by residues H899, H908, H1008, H1012, and H1039. Disulfide bonds link C998–C1065 and C1152–C1158.

The protein belongs to the tyrosinase family. Hemocyanin subfamily. As to quaternary structure, decamers of large identical subunits (350 kDa), each containing 7 globular oxygen-binding domains: ODA, ODB, ODC, ODD, ODE, ODF, and ODG. It depends on Cu(2+) as a cofactor.

Functionally, hemocyanins are copper-containing oxygen carriers occurring freely dissolved in the hemolymph of many mollusks and arthropods. This Enteroctopus dofleini (North Pacific giant octopus) protein is Hemocyanin A-type, units Ode to Odg.